The chain runs to 648 residues: Replication restart protein PriA (648 aa).

The 167-residue stretch at 131–297 (TIFNESNKPT…KTHKYQLVTL (167 aa)) folds into the Helicase ATP-binding domain. 144–151 (GVTGSGKT) serves as a coordination point for ATP. The DEAH box signature appears at 240–243 (DEEH). Residues Cys358, Cys361, Cys367, Cys370, Cys385, Cys388, Cys398, and Cys401 each contribute to the Zn(2+) site. The 156-residue stretch at 393 to 548 (KIFSSCPECL…SFFTNELEIR (156 aa)) folds into the Helicase C-terminal domain.

This sequence belongs to the helicase family. PriA subfamily. As to quaternary structure, component of the replication restart primosome. Zn(2+) is required as a cofactor.

The enzyme catalyses Couples ATP hydrolysis with the unwinding of duplex DNA by translocating in the 3'-5' direction.. It carries out the reaction ATP + H2O = ADP + phosphate + H(+). In terms of biological role, initiates the restart of stalled replication forks, which reloads the replicative helicase on sites other than the origin of replication. Recognizes and binds to abandoned replication forks and remodels them to uncover a helicase loading site. Promotes assembly of the primosome at these replication forks. This is Replication restart protein PriA from Rickettsia typhi (strain ATCC VR-144 / Wilmington).